Consider the following 86-residue polypeptide: Small ribosomal subunit protein uS17 (86 aa).

This sequence belongs to the universal ribosomal protein uS17 family. Part of the 30S ribosomal subunit.

Its function is as follows. One of the primary rRNA binding proteins, it binds specifically to the 5'-end of 16S ribosomal RNA. The polypeptide is Small ribosomal subunit protein uS17 (Caldicellulosiruptor saccharolyticus (strain ATCC 43494 / DSM 8903 / Tp8T 6331)).